The sequence spans 247 residues: Uridylate kinase (247 aa).

16–19 (KLSG) contributes to the ATP binding site. Residue G58 participates in UMP binding. ATP is bound by residues G59 and R63. UMP is bound by residues D78 and 139–146 (TGNPFFTT). Positions 166, 172, and 175 each coordinate ATP.

It belongs to the UMP kinase family. In terms of assembly, homohexamer.

The protein localises to the cytoplasm. It catalyses the reaction UMP + ATP = UDP + ADP. It participates in pyrimidine metabolism; CTP biosynthesis via de novo pathway; UDP from UMP (UMPK route): step 1/1. Inhibited by UTP. Catalyzes the reversible phosphorylation of UMP to UDP. In Xylella fastidiosa (strain Temecula1 / ATCC 700964), this protein is Uridylate kinase.